The chain runs to 347 residues: MLDSFMTQLEIVGNRSKCVNMLLWSIFGFGVLKATTLILRIMACFVDLFVLPPVNYSKYGSKNGNYCVITGASDGIGKEFAFQMAKRGFNLILISRTLSKLETLQKEISTKYNVKVEVLAIDVAKDSEDNYSAIKELCGKFPITALINNVGQSHSIPVPFLETDEDEMRRIITINNTATLMITQIIAPMIIKTTKESSKKTRGLILTMGSFGGLIPTPLLATYSGSKAFLQSWSSSLAGELKEHNVDVELIISYLVTSSMSKIRKTSMMIPNPKTFVASTLRNIGRRCGAQERYATITPYWSHALYQLAIVEAVGVYSHLVNYINYVFHKSIRIRALKKAARDAKKQ.

Residues 22-42 traverse the membrane as a helical segment; sequence LLWSIFGFGVLKATTLILRIM. NADP(+)-binding residues include valine 68, aspartate 122, asparagine 149, tyrosine 223, lysine 227, valine 256, and serine 258. Catalysis depends on tyrosine 223, which acts as the Proton donor. Residue lysine 227 is the Lowers pKa of active site Tyr of the active site.

This sequence belongs to the short-chain dehydrogenases/reductases (SDR) family.

The protein resides in the endoplasmic reticulum membrane. The catalysed reaction is a very-long-chain (3R)-3-hydroxyacyl-CoA + NADP(+) = a very-long-chain 3-oxoacyl-CoA + NADPH + H(+). Its pathway is lipid metabolism; fatty acid biosynthesis. In terms of biological role, component of the microsomal membrane bound fatty acid elongation system, which produces the 26-carbon very long-chain fatty acids (VLCFA) from palmitate. Catalyzes the reduction of the 3-ketoacyl-CoA intermediate that is formed in each cycle of fatty acid elongation. VLCFAs serve as precursors for ceramide and sphingolipids. This is Very-long-chain 3-oxoacyl-CoA reductase from Vanderwaltozyma polyspora (strain ATCC 22028 / DSM 70294 / BCRC 21397 / CBS 2163 / NBRC 10782 / NRRL Y-8283 / UCD 57-17) (Kluyveromyces polysporus).